The sequence spans 349 residues: Short-wave-sensitive opsin 1 (349 aa).

Residues 1 to 34 (MSKMPEEEEFYLFKNISSVGPWDGPQYHIAPVWA) lie on the Extracellular side of the membrane. N-linked (GlcNAc...) asparagine glycosylation occurs at N15. A helical membrane pass occupies residues 35-59 (FQLQAAFMGIVFLAGLPLNSMVLVA). At 60 to 71 (TVRYKKLRHPLN) the chain is on the cytoplasmic side. The helical transmembrane segment at 72–97 (YVLVNVSVGGFLLCIFSVLPVFVNSC) threads the bilayer. Over 98–111 (NGYFVFGRHVCALE) the chain is Extracellular. A disulfide bridge links C108 with C185. The helical transmembrane segment at 112–131 (GFLGTVAGLVTGWSLAFLAF) threads the bilayer. Topologically, residues 132-150 (ERYIVICKPFGNFRFSSKH) are cytoplasmic. The helical transmembrane segment at 151-174 (ALMVVLTTWTIGIGVSIPPFFGWS) threads the bilayer. Over 175–200 (RYIAEGLQCSCGPDWYTVGTKYRSEY) the chain is Extracellular. The chain crosses the membrane as a helical span at residues 201–228 (YTWFLFIFCFIVPLSLICFSYAQLLRAL). The Cytoplasmic portion of the chain corresponds to 229-250 (KAVAAQQQESATTQKAEREVSR). A helical transmembrane segment spans residues 251–274 (MVVVMVGSFCVCYVPYAALAMYMV). Topologically, residues 275–282 (NNRNHGLD) are extracellular. Residues 283 to 307 (LRLVSIPAFFSKSSCIYNPIIYCFM) form a helical membrane-spanning segment. Position 294 is an N6-(retinylidene)lysine (K294). Residues 308 to 349 (NKQFRACIMEMVCGKAMTDESDISSSQKTEVSTVSSSQVGPN) are Cytoplasmic-facing.

It belongs to the G-protein coupled receptor 1 family. Opsin subfamily. Phosphorylated on some or all of the serine and threonine residues present in the C-terminal region.

The protein resides in the cell membrane. Its subcellular location is the photoreceptor inner segment. It is found in the cell projection. The protein localises to the cilium. It localises to the photoreceptor outer segment. The protein resides in the cytoplasm. Its subcellular location is the perinuclear region. Visual pigments are the light-absorbing molecules that mediate vision. They consist of an apoprotein, opsin, covalently linked to cis-retinal. Required for the maintenance of cone outer segment organization in the ventral retina, but not essential for the maintenance of functioning cone photoreceptors. Involved in ensuring correct abundance and localization of retinal membrane proteins. May increase spectral sensitivity in dim light. The protein is Short-wave-sensitive opsin 1 (OPN1SW) of Saimiri boliviensis boliviensis (Bolivian squirrel monkey).